Consider the following 207-residue polypeptide: Dephospho-CoA kinase (207 aa).

Positions 10–207 (ILGLTGGIGS…FYLTLRGGQS (198 aa)) constitute a DPCK domain. 18 to 23 (GSGKSA) provides a ligand contact to ATP.

Belongs to the CoaE family.

It localises to the cytoplasm. The catalysed reaction is 3'-dephospho-CoA + ATP = ADP + CoA + H(+). Its pathway is cofactor biosynthesis; coenzyme A biosynthesis; CoA from (R)-pantothenate: step 5/5. Functionally, catalyzes the phosphorylation of the 3'-hydroxyl group of dephosphocoenzyme A to form coenzyme A. The polypeptide is Dephospho-CoA kinase (Pseudomonas syringae pv. tomato (strain ATCC BAA-871 / DC3000)).